The following is a 326-amino-acid chain: Probable fructokinase-4 (326 aa).

Belongs to the carbohydrate kinase PfkB family.

The catalysed reaction is D-fructose + ATP = D-fructose 6-phosphate + ADP + H(+). It functions in the pathway glycan biosynthesis; starch biosynthesis. Functionally, may play an important role in maintaining the flux of carbon towards starch formation. The chain is Probable fructokinase-4 from Arabidopsis thaliana (Mouse-ear cress).